Consider the following 696-residue polypeptide: Solute carrier family 53 member 1 (696 aa).

Topologically, residues 1-228 (MKFAEHLSAH…RVPPLGAAQP (228 aa)) are cytoplasmic. The 223-residue stretch at 2–224 (KFAEHLSAHI…MKRLRVPPLG (223 aa)) folds into the SPX domain. The important for inositol polyphosphate binding stretch occupies residues 158–165 (KILKKHDK). A helical membrane pass occupies residues 229-259 (APAWTTFRVGLFCGIFIVLNITLVFAAVFKL). Topologically, residues 260–264 (ETDRT) are extracellular. Residues 265–296 (VWPLIRIYRGGFLLIEFLFLLGINTYGWRQAG) form a helical membrane-spanning segment. Residues 297–309 (VNHVLIFELNPRN) lie on the Cytoplasmic side of the membrane. Residues 310 to 337 (NLSHQHLFEIAGFLGILWCLSLLACFFA) form a helical membrane-spanning segment. Residues 338–343 (PISIIP) lie on the Extracellular side of the membrane. Residues 344–365 (IYVYPLALYGFMVFFLINPTKT) form a helical membrane-spanning segment. The helical intramembrane region spans 366–383 (FYYKSRFWLLKLLFRVFT). At 384-388 (APFHK) the chain is on the cytoplasmic side. Residues 389–422 (VGFADFWLADQLNSLSVILMDLEYMICFYSFELK) traverse the membrane as a discontinuously helical segment. The phosphate site is built by Asp-398 and Asn-401. Residues 423-429 (WDESKGL) are Extracellular-facing. The discontinuously helical transmembrane segment at 430 to 471 (LPNDPQGPEFCHKYTYGVRAIVQCIPAWLRFIQCLRRYRDTR) threads the bilayer. In terms of domain architecture, EXS spans 439-643 (FCHKYTYGVR…LNADDQTLLE (205 aa)). Position 472 (Arg-472) is a topological domain, cytoplasmic. A helical membrane pass occupies residues 473-503 (AFPHLVNAGKYSTTFFTVTFAALYSTHKEQN). Positions 482 and 483 each coordinate phosphate. Residues 504-506 (HPD) lie on the Extracellular side of the membrane. Residues 507–534 (YKVFFYLWVFFCIISSCYTLIWDLKMDW) traverse the membrane as a helical segment. The Cytoplasmic portion of the chain corresponds to 535-553 (GLFDKNAGENTFLREEIVY). A discontinuously helical transmembrane segment spans residues 554-585 (PQKAYYYCAIIEDVILRFAWTIQISITVTTFK). Arg-570 is a phosphate binding site. Residues 586-587 (PH) lie on the Extracellular side of the membrane. A helical membrane pass occupies residues 588 to 626 (VGDIIATVFAPLEVFRRFVWNFFRLENEHLNNCGEFRAV). 2 residues coordinate phosphate: Arg-603 and Arg-604. At 627-696 (RDISVAPLNA…IEDTDDEANT (70 aa)) the chain is on the cytoplasmic side. Ser-668 bears the Phosphoserine mark. Residues 672-696 (PRLASQSKARDTKVLIEDTDDEANT) form a disordered region. The residue at position 690 (Thr-690) is a Phosphothreonine.

The protein belongs to the SYG1 (TC 2.A.94) family. As to quaternary structure, homodimer.

It localises to the cell membrane. The enzyme catalyses phosphate(in) = phosphate(out). Functionally, inorganic ion transporter that mediates phosphate ion export across plasma membrane. Plays a major role in phosphate homeostasis, preventing intracellular phosphate accumulation and possible calcium phosphate precipitation, ultimately preserving calcium signaling. Binds inositol hexakisphosphate (Ins6P) and similar inositol polyphosphates, such as 5-diphospho-inositol pentakisphosphate (5-InsP7), which are important intracellular signaling molecules involved in regulation of phosphate flux. The protein is Solute carrier family 53 member 1 (Xpr1) of Mus pahari (Gairdner's shrew-mouse).